The sequence spans 61 residues: Photosystem II reaction center protein Z (61 aa).

2 helical membrane passes run 8-28 and 41-61; these read ALLV…VLFS and LVGS…SFFK.

This sequence belongs to the PsbZ family. PSII is composed of 1 copy each of membrane proteins PsbA, PsbB, PsbC, PsbD, PsbE, PsbF, PsbH, PsbI, PsbJ, PsbK, PsbL, PsbM, PsbT, PsbX, PsbY, PsbZ, Psb30/Ycf12, peripheral proteins PsbO, CyanoQ (PsbQ), PsbU, PsbV and a large number of cofactors. It forms dimeric complexes.

It is found in the cellular thylakoid membrane. Its function is as follows. May control the interaction of photosystem II (PSII) cores with the light-harvesting antenna, regulates electron flow through the 2 photosystem reaction centers. PSII is a light-driven water plastoquinone oxidoreductase, using light energy to abstract electrons from H(2)O, generating a proton gradient subsequently used for ATP formation. In Synechococcus sp. (strain JA-3-3Ab) (Cyanobacteria bacterium Yellowstone A-Prime), this protein is Photosystem II reaction center protein Z.